The following is a 126-amino-acid chain: Holo-[acyl-carrier-protein] synthase (126 aa).

Residues aspartate 9 and glutamate 58 each coordinate Mg(2+).

Belongs to the P-Pant transferase superfamily. AcpS family. Requires Mg(2+) as cofactor.

Its subcellular location is the cytoplasm. It carries out the reaction apo-[ACP] + CoA = holo-[ACP] + adenosine 3',5'-bisphosphate + H(+). Its function is as follows. Transfers the 4'-phosphopantetheine moiety from coenzyme A to a Ser of acyl-carrier-protein. This chain is Holo-[acyl-carrier-protein] synthase, found in Aliivibrio salmonicida (strain LFI1238) (Vibrio salmonicida (strain LFI1238)).